The primary structure comprises 489 residues: Ribulose bisphosphate carboxylase large chain 2 (489 aa).

Substrate is bound by residues asparagine 128 and threonine 178. Lysine 180 acts as the Proton acceptor in catalysis. Lysine 182 is a substrate binding site. Mg(2+) contacts are provided by lysine 206, aspartate 208, and glutamate 209. Lysine 206 is subject to N6-carboxylysine. Residue histidine 298 is the Proton acceptor of the active site. The substrate site is built by arginine 299, histidine 331, and serine 383.

This sequence belongs to the RuBisCO large chain family. Type I subfamily. As to quaternary structure, heterohexadecamer of 8 large chains and 8 small chains. Mg(2+) serves as cofactor.

The catalysed reaction is 2 (2R)-3-phosphoglycerate + 2 H(+) = D-ribulose 1,5-bisphosphate + CO2 + H2O. It carries out the reaction D-ribulose 1,5-bisphosphate + O2 = 2-phosphoglycolate + (2R)-3-phosphoglycerate + 2 H(+). Its function is as follows. RuBisCO catalyzes two reactions: the carboxylation of D-ribulose 1,5-bisphosphate, the primary event in carbon dioxide fixation, as well as the oxidative fragmentation of the pentose substrate. Both reactions occur simultaneously and in competition at the same active site. The polypeptide is Ribulose bisphosphate carboxylase large chain 2 (Nitrobacter winogradskyi (strain ATCC 25391 / DSM 10237 / CIP 104748 / NCIMB 11846 / Nb-255)).